Here is a 312-residue protein sequence, read N- to C-terminus: Olfactory receptor 2B8 (312 aa).

Topologically, residues 1-25 (MDQKNGSSFTGFILLGFSDRPQLEL) are extracellular. N5 is a glycosylation site (N-linked (GlcNAc...) asparagine). Residues 26–49 (VLFVVLLIFYIFTLLGNKTIIVLS) traverse the membrane as a helical segment. At 50-57 (HLDPHLHT) the chain is on the cytoplasmic side. Residues 58-79 (PMYFFFSNLSFLDLCYTTGIVP) form a helical membrane-spanning segment. At 80–100 (QLLVNLRGADKSISYGGCVVQ) the chain is on the extracellular side. C97 and C189 form a disulfide bridge. Residues 101–120 (LYISLGLGSTECVLLGVMVF) form a helical membrane-spanning segment. At 121 to 139 (DRYAAVCRPLHYTVVMHPC) the chain is on the cytoplasmic side. The helical transmembrane segment at 140-158 (LYVLMASTSWVIGFANSLL) threads the bilayer. Residues 159–195 (QTVLILLLTLCGRNKLEHFLCEVPPLLKLACVDTTMN) lie on the Extracellular side of the membrane. A glycan (N-linked (GlcNAc...) asparagine) is linked at N195. Residues 196–219 (ESELFFVSVIILLVPVALIIFSYS) traverse the membrane as a helical segment. Over 220–236 (QIVRAVMRIKLATGQRK) the chain is Cytoplasmic. The chain crosses the membrane as a helical span at residues 237–259 (VFGTCGSHLTVVSLFYGTAIYAY). Topologically, residues 260–272 (LQPGNNYSQDQGK) are extracellular. N265 carries an N-linked (GlcNAc...) asparagine glycan. Residues 273-292 (FISLFYTIITPMINPLIYTL) traverse the membrane as a helical segment. Residues 293-312 (RNKDVKGALKKVLWKNYDSR) are Cytoplasmic-facing.

It belongs to the G-protein coupled receptor 1 family.

Its subcellular location is the cell membrane. Odorant receptor. The protein is Olfactory receptor 2B8 of Homo sapiens (Human).